A 309-amino-acid chain; its full sequence is PI-PLC X domain-containing protein 1 (309 aa).

Residues 17–193 (HMWDIPLWNL…QVILSYDDES (177 aa)) enclose the PI-PLC X-box domain.

The polypeptide is PI-PLC X domain-containing protein 1 (plcxd1) (Danio rerio (Zebrafish)).